Consider the following 196-residue polypeptide: Proteasome subunit beta 2 (196 aa).

Residues 1-6 (MEELPS) constitute a propeptide, removed in mature form; by autocatalysis. Threonine 7 acts as the Nucleophile in catalysis.

The protein belongs to the peptidase T1B family. In terms of assembly, the 20S proteasome core is composed of 14 alpha and 14 beta subunits that assemble into four stacked heptameric rings, resulting in a barrel-shaped structure. The two inner rings, each composed of seven catalytic beta subunits, are sandwiched by two outer rings, each composed of seven alpha subunits. The catalytic chamber with the active sites is on the inside of the barrel. Has a gated structure, the ends of the cylinder being occluded by the N-termini of the alpha-subunits. Is capped at one or both ends by the proteasome regulatory ATPase, PAN.

The protein resides in the cytoplasm. It carries out the reaction Cleavage of peptide bonds with very broad specificity.. The formation of the proteasomal ATPase PAN-20S proteasome complex, via the docking of the C-termini of PAN into the intersubunit pockets in the alpha-rings, triggers opening of the gate for substrate entry. Interconversion between the open-gate and close-gate conformations leads to a dynamic regulation of the 20S proteasome proteolysis activity. Its function is as follows. Component of the proteasome core, a large protease complex with broad specificity involved in protein degradation. The sequence is that of Proteasome subunit beta 2 from Metallosphaera sedula (strain ATCC 51363 / DSM 5348 / JCM 9185 / NBRC 15509 / TH2).